The primary structure comprises 143 residues: Large ribosomal subunit protein uL11 (143 aa).

Belongs to the universal ribosomal protein uL11 family. Part of the ribosomal stalk of the 50S ribosomal subunit. Interacts with L10 and the large rRNA to form the base of the stalk. L10 forms an elongated spine to which L12 dimers bind in a sequential fashion forming a multimeric L10(L12)X complex. In terms of processing, one or more lysine residues are methylated.

Forms part of the ribosomal stalk which helps the ribosome interact with GTP-bound translation factors. The sequence is that of Large ribosomal subunit protein uL11 from Verminephrobacter eiseniae (strain EF01-2).